A 615-amino-acid chain; its full sequence is 1-deoxy-D-xylulose-5-phosphate synthase (615 aa).

Residues His-72 and 111–113 (GHS) each bind thiamine diphosphate. A Mg(2+)-binding site is contributed by Asp-142. Residues 143–144 (GA), Asn-171, Tyr-278, and Glu-360 each bind thiamine diphosphate. Position 171 (Asn-171) interacts with Mg(2+).

This sequence belongs to the transketolase family. DXPS subfamily. As to quaternary structure, homodimer. Requires Mg(2+) as cofactor. The cofactor is thiamine diphosphate.

The enzyme catalyses D-glyceraldehyde 3-phosphate + pyruvate + H(+) = 1-deoxy-D-xylulose 5-phosphate + CO2. Its pathway is metabolic intermediate biosynthesis; 1-deoxy-D-xylulose 5-phosphate biosynthesis; 1-deoxy-D-xylulose 5-phosphate from D-glyceraldehyde 3-phosphate and pyruvate: step 1/1. Its function is as follows. Catalyzes the acyloin condensation reaction between C atoms 2 and 3 of pyruvate and glyceraldehyde 3-phosphate to yield 1-deoxy-D-xylulose-5-phosphate (DXP). This Campylobacter jejuni subsp. jejuni serotype O:23/36 (strain 81-176) protein is 1-deoxy-D-xylulose-5-phosphate synthase.